The sequence spans 504 residues: D-alanine--D-alanyl carrier protein ligase (504 aa).

152–153 (TS) lines the ATP pocket. Asp197 contributes to the D-alanine binding site. 292–297 (NTYGPT) serves as a coordination point for ATP. Val301 provides a ligand contact to D-alanine. ATP contacts are provided by residues Asp383, 394 to 397 (YNGR), and Lys492. A D-alanine-binding site is contributed by Lys492.

The protein belongs to the ATP-dependent AMP-binding enzyme family. DltA subfamily.

The protein localises to the cytoplasm. The enzyme catalyses holo-[D-alanyl-carrier protein] + D-alanine + ATP = D-alanyl-[D-alanyl-carrier protein] + AMP + diphosphate. Its pathway is cell wall biogenesis; lipoteichoic acid biosynthesis. In terms of biological role, catalyzes the first step in the D-alanylation of lipoteichoic acid (LTA), the activation of D-alanine and its transfer onto the D-alanyl carrier protein (Dcp) DltC. In an ATP-dependent two-step reaction, forms a high energy D-alanyl-AMP intermediate, followed by transfer of the D-alanyl residue as a thiol ester to the phosphopantheinyl prosthetic group of the Dcp. D-alanylation of LTA plays an important role in modulating the properties of the cell wall in Gram-positive bacteria, influencing the net charge of the cell wall. This Bacillus cereus (strain B4264) protein is D-alanine--D-alanyl carrier protein ligase.